The sequence spans 681 residues: Proline dehydrogenase 1, mitochondrial (681 aa).

The transit peptide at 1 to 30 (MALLRSLSAQRTAISLVYGRNSSKSSNSVA) directs the protein to the mitochondrion. Over residues 76–87 (STLVQPEVVSSE) the composition is skewed to polar residues. 2 disordered regions span residues 76–113 (STLV…QRDP) and 216–239 (EEAE…EGSM). A compositionally biased stretch (basic and acidic residues) spans 88–99 (TVKRSMKQESSQ).

The protein belongs to the proline oxidase family. It depends on FAD as a cofactor. As to expression, most abundant in developing nervous system.

It is found in the mitochondrion matrix. The catalysed reaction is L-proline + a quinone = (S)-1-pyrroline-5-carboxylate + a quinol + H(+). It functions in the pathway amino-acid degradation; L-proline degradation into L-glutamate; L-glutamate from L-proline: step 1/2. Converts proline to delta-1-pyrroline-5-carboxylate. Involved in the conversion of proline to glutamate, which functions as a transmitter at neuromuscular junctions. Glutamate deficiency could possibly account for reduced motor activity. The protein is Proline dehydrogenase 1, mitochondrial (slgA) of Drosophila melanogaster (Fruit fly).